Here is a 469-residue protein sequence, read N- to C-terminus: 3-isopropylmalate dehydratase large subunit (469 aa).

3 residues coordinate [4Fe-4S] cluster: Cys-347, Cys-410, and Cys-413.

Belongs to the aconitase/IPM isomerase family. LeuC type 1 subfamily. Heterodimer of LeuC and LeuD. The cofactor is [4Fe-4S] cluster.

It catalyses the reaction (2R,3S)-3-isopropylmalate = (2S)-2-isopropylmalate. It participates in amino-acid biosynthesis; L-leucine biosynthesis; L-leucine from 3-methyl-2-oxobutanoate: step 2/4. In terms of biological role, catalyzes the isomerization between 2-isopropylmalate and 3-isopropylmalate, via the formation of 2-isopropylmaleate. This Burkholderia lata (strain ATCC 17760 / DSM 23089 / LMG 22485 / NCIMB 9086 / R18194 / 383) protein is 3-isopropylmalate dehydratase large subunit.